Here is a 126-residue protein sequence, read N- to C-terminus: Holo-[acyl-carrier-protein] synthase (126 aa).

Positions 8 and 59 each coordinate Mg(2+).

The protein belongs to the P-Pant transferase superfamily. AcpS family. Mg(2+) is required as a cofactor.

Its subcellular location is the cytoplasm. It catalyses the reaction apo-[ACP] + CoA = holo-[ACP] + adenosine 3',5'-bisphosphate + H(+). Functionally, transfers the 4'-phosphopantetheine moiety from coenzyme A to a Ser of acyl-carrier-protein. This is Holo-[acyl-carrier-protein] synthase from Rickettsia prowazekii (strain Madrid E).